The sequence spans 394 residues: Elongation factor Tu (394 aa).

The region spanning 10-204 is the tr-type G domain; that stretch reads KEHANIGTIG…AVDTYIPTPE (195 aa). Residues 19-26 are G1; that stretch reads GHVDHGKT. Residue 19–26 participates in GTP binding; that stretch reads GHVDHGKT. Thr26 contacts Mg(2+). The interval 60–64 is G2; it reads GITIN. The G3 stretch occupies residues 81–84; it reads DCPG. Residues 81-85 and 136-139 each bind GTP; these read DCPGH and NKVD. The segment at 136–139 is G4; that stretch reads NKVD. Positions 174–176 are G5; sequence SAL.

Belongs to the TRAFAC class translation factor GTPase superfamily. Classic translation factor GTPase family. EF-Tu/EF-1A subfamily. Monomer.

It localises to the cytoplasm. It catalyses the reaction GTP + H2O = GDP + phosphate + H(+). Its function is as follows. GTP hydrolase that promotes the GTP-dependent binding of aminoacyl-tRNA to the A-site of ribosomes during protein biosynthesis. The polypeptide is Elongation factor Tu (Staphylococcus aureus (strain COL)).